The sequence spans 272 residues: Acetyl-coenzyme A carboxylase carboxyl transferase subunit alpha (272 aa).

One can recognise a CoA carboxyltransferase C-terminal domain in the interval 1 to 248; the sequence is MDKDFMKINV…KKTIVDSLLE (248 aa).

The protein belongs to the AccA family. Acetyl-CoA carboxylase is a heterohexamer composed of biotin carboxyl carrier protein (AccB), biotin carboxylase (AccC) and two subunits each of ACCase subunit alpha (AccA) and ACCase subunit beta (AccD).

The protein localises to the cytoplasm. The catalysed reaction is N(6)-carboxybiotinyl-L-lysyl-[protein] + acetyl-CoA = N(6)-biotinyl-L-lysyl-[protein] + malonyl-CoA. The protein operates within lipid metabolism; malonyl-CoA biosynthesis; malonyl-CoA from acetyl-CoA: step 1/1. In terms of biological role, component of the acetyl coenzyme A carboxylase (ACC) complex. First, biotin carboxylase catalyzes the carboxylation of biotin on its carrier protein (BCCP) and then the CO(2) group is transferred by the carboxyltransferase to acetyl-CoA to form malonyl-CoA. This is Acetyl-coenzyme A carboxylase carboxyl transferase subunit alpha from Clostridium beijerinckii (strain ATCC 51743 / NCIMB 8052) (Clostridium acetobutylicum).